Here is a 241-residue protein sequence, read N- to C-terminus: Biosynthetic peptidoglycan transglycosylase (241 aa).

The chain crosses the membrane as a helical span at residues 18–38 (GVIGIIALWMAGILIFAFLPV).

This sequence belongs to the glycosyltransferase 51 family.

It is found in the cell inner membrane. It catalyses the reaction [GlcNAc-(1-&gt;4)-Mur2Ac(oyl-L-Ala-gamma-D-Glu-L-Lys-D-Ala-D-Ala)](n)-di-trans,octa-cis-undecaprenyl diphosphate + beta-D-GlcNAc-(1-&gt;4)-Mur2Ac(oyl-L-Ala-gamma-D-Glu-L-Lys-D-Ala-D-Ala)-di-trans,octa-cis-undecaprenyl diphosphate = [GlcNAc-(1-&gt;4)-Mur2Ac(oyl-L-Ala-gamma-D-Glu-L-Lys-D-Ala-D-Ala)](n+1)-di-trans,octa-cis-undecaprenyl diphosphate + di-trans,octa-cis-undecaprenyl diphosphate + H(+). The protein operates within cell wall biogenesis; peptidoglycan biosynthesis. Its function is as follows. Peptidoglycan polymerase that catalyzes glycan chain elongation from lipid-linked precursors. This Yersinia pseudotuberculosis serotype O:3 (strain YPIII) protein is Biosynthetic peptidoglycan transglycosylase.